The primary structure comprises 205 residues: Probable GTP-binding protein EngB (205 aa).

One can recognise an EngB-type G domain in the interval 29-203 (QGAEIAFIGR…KAVLSQWFRS (175 aa)). GTP is bound by residues 37–44 (GRSNAGKS), 64–68 (GRTQM), 82–85 (DLPG), 149–152 (TKSD), and 182–184 (FSS). Residues serine 44 and threonine 66 each contribute to the Mg(2+) site.

This sequence belongs to the TRAFAC class TrmE-Era-EngA-EngB-Septin-like GTPase superfamily. EngB GTPase family. It depends on Mg(2+) as a cofactor.

Its function is as follows. Necessary for normal cell division and for the maintenance of normal septation. The polypeptide is Probable GTP-binding protein EngB (Coxiella burnetii (strain RSA 331 / Henzerling II)).